Consider the following 595-residue polypeptide: MTSYHSHPPKAYRRFESVCTQAPNAIAVVHEGKPVTYQQLQTQVLERSEALIRQGLADHPYMPLMANRCLEYLITMLACCKLGITYVSIEPSTPSKRLIAVLEQLGCNHLLLLGQPTDLRPDPTLTCFRLDDCGTLCSDGPALRQPIRRRLDDASVITVMFTSGTTGVPKGVRISQDGLLNLVDNVQQQVQGKPRSYVHHSSIGFDAALFEVWVPLLTGACVTLQPSEFNIDALDHCVRAASCDVLLLTTSLFHLVAQHRLSMLEAVRVLYVGGEVLKPVHARALLLANPRITLVNGYGPTENTVFSTWYSLNKPEDAERDVIPIGQFLHQVHGKIVDAKLQEVEVGTPGELLLTGANLALGYLDEALTPTRFLQLPEGTYYRTGDYVIQDEHGMLFYQGRIDEQVKIKGFRVEIAEVEHALTQLPGVAQAVVQAHVMNDLENSLHAFIVFRHGSPTIEESKLMSLLGDRLPHYMVPRRIHYLAELPLTANGKVDKRSLQPPEKAAVVSPQAGSAVLEIWSGILGTRNLQLEHSIYGYGASSLSVVMAHSRINEILGRTTPFDEVARLSTFQEWVQYYATHADPVTSLRSQHGNH.

A Carrier domain is found at 507–582 (VVSPQAGSAV…EWVQYYATHA (76 aa)). Ser542 carries the post-translational modification O-(pantetheine 4'-phosphoryl)serine.

It belongs to the ATP-dependent AMP-binding enzyme family. As to quaternary structure, homodimer. It depends on pantetheine 4'-phosphate as a cofactor.

The enzyme catalyses L-alloisoleucine + holo-[CmaA peptidyl-carrier protein] + ATP = L-alloisoleucyl-[CmaA peptidyl-carrier protein] + AMP + diphosphate. Functionally, involved in the biosynthesis of the phytotoxin coronatine (COR) which mimics the plant hormone jasmonic acid isoleucine and promotes opening of stomata for bacterial entry, bacterial growth in the apoplast, systemic susceptibility, and disease symptoms. CmaA catalyzes the adenylation of L-allo-isoleucine (via the A domain) and the attachment of L-allo-isoleucine to the 4'-phosphopantetheine arm located within the T domain of CmaA. It can also use L-isoleucine, L-leucine and L-valine as substrates. This Pseudomonas savastanoi pv. glycinea (Pseudomonas syringae pv. glycinea) protein is L-allo-isoleucine:holo-[CmaA peptidyl-carrier protein] ligase.